The chain runs to 863 residues: Leucine--tRNA ligase (863 aa).

Residues 42 to 52 (PYPSGRLHMGH) carry the 'HIGH' region motif. The 'KMSKS' region signature appears at 622 to 626 (KMSKS). Residue Lys-625 coordinates ATP.

It belongs to the class-I aminoacyl-tRNA synthetase family.

Its subcellular location is the cytoplasm. The enzyme catalyses tRNA(Leu) + L-leucine + ATP = L-leucyl-tRNA(Leu) + AMP + diphosphate. The polypeptide is Leucine--tRNA ligase (Shewanella denitrificans (strain OS217 / ATCC BAA-1090 / DSM 15013)).